We begin with the raw amino-acid sequence, 339 residues long: Ketol-acid reductoisomerase (NADP(+)) (339 aa).

The 182-residue stretch at 1-182 (MRVYYDRDAD…GGGRSGIIET (182 aa)) folds into the KARI N-terminal Rossmann domain. Residues 24-27 (YGSQ), Lys48, Ser51, Thr53, and 83-86 (DELQ) each bind NADP(+). His108 is a catalytic residue. Gly134 is an NADP(+) binding site. The KARI C-terminal knotted domain occupies 183 to 328 (NFREECETDL…AKLRAMMPWI (146 aa)). Mg(2+) contacts are provided by Asp191, Glu195, Glu227, and Glu231. Ser252 lines the substrate pocket.

It belongs to the ketol-acid reductoisomerase family. It depends on Mg(2+) as a cofactor.

It carries out the reaction (2R)-2,3-dihydroxy-3-methylbutanoate + NADP(+) = (2S)-2-acetolactate + NADPH + H(+). The enzyme catalyses (2R,3R)-2,3-dihydroxy-3-methylpentanoate + NADP(+) = (S)-2-ethyl-2-hydroxy-3-oxobutanoate + NADPH + H(+). The protein operates within amino-acid biosynthesis; L-isoleucine biosynthesis; L-isoleucine from 2-oxobutanoate: step 2/4. Its pathway is amino-acid biosynthesis; L-valine biosynthesis; L-valine from pyruvate: step 2/4. Its function is as follows. Involved in the biosynthesis of branched-chain amino acids (BCAA). Catalyzes an alkyl-migration followed by a ketol-acid reduction of (S)-2-acetolactate (S2AL) to yield (R)-2,3-dihydroxy-isovalerate. In the isomerase reaction, S2AL is rearranged via a Mg-dependent methyl migration to produce 3-hydroxy-3-methyl-2-ketobutyrate (HMKB). In the reductase reaction, this 2-ketoacid undergoes a metal-dependent reduction by NADPH to yield (R)-2,3-dihydroxy-isovalerate. In Mesorhizobium japonicum (strain LMG 29417 / CECT 9101 / MAFF 303099) (Mesorhizobium loti (strain MAFF 303099)), this protein is Ketol-acid reductoisomerase (NADP(+)).